Consider the following 213-residue polypeptide: Andrastin A biosynthesis cluster protein B (213 aa).

Part of the gene cluster that mediates the biosynthesis of andrastins, meroterpenoid compounds that exhibit inhibitory activity against ras farnesyltransferase, suggesting that they could be promising leads for antitumor agents. The first step of the pathway is the synthesis of 3,5-dimethylorsellinic acid (DMOA) by the polyketide synthase adrD via condensation of one acetyl-CoA starter unit with 3 malonyl-CoA units and 2 methylations. DMAO is then converted to farnesyl-DMAO by the prenyltransferase adrG. The methyltransferase adrK catalyzes the methylation of the carboxyl group of farnesyl-DMAO to farnesyl-DMAO methyl ester which is further converted to epoxyfarnesyl-DMAO methyl ester by the FAD-dependent monooxygenase adrH. The terpene cyclase adrI then catalyzes the carbon skeletal rearrangement to generate the andrastin E, the first compound in the pathway having the andrastin scaffold, with the tetracyclic ring system. The post-cyclization tailoring enzymes adrF, adrE, adrJ, and adrA, are involved in the conversion of andrastin E into andrastin A. The short chain dehydrogenase adrF is responsible for the oxidation of the C-3 a hydroxyl group of andrastin E to yield the corresponding ketone, andrastin D. The ketoreductase adrE stereoselectively reduces the carbonyl moiety to reverse the stereochemistry of the C-3 position to yield andrastin F. The acetyltransferase adrJ is the acetyltransferase that attaches the acetyl group to the C-3 hydroxyl group of andrastin F to yield andrastin C. Finally, the cytochrome P450 monooxygenase adrA catalyzes two sequential oxidation reactions of the C-23 methyl group, to generate the corresponding alcohol andrastin B, and aldehyde andrastin A. This chain is Andrastin A biosynthesis cluster protein B, found in Penicillium rubens (strain ATCC 28089 / DSM 1075 / NRRL 1951 / Wisconsin 54-1255) (Penicillium chrysogenum).